The sequence spans 157 residues: UPF0262 protein amb3341 (157 aa).

The protein belongs to the UPF0262 family.

This chain is UPF0262 protein amb3341, found in Paramagnetospirillum magneticum (strain ATCC 700264 / AMB-1) (Magnetospirillum magneticum).